The following is an 86-amino-acid chain: Beta-toxin To4 (86 aa).

An N-terminal signal peptide occupies residues 1–20 (MTRFVLFISCFFLIGMIVEC). The 63-residue stretch at 21-83 (KDGYLMEYGG…IWNRATNKCG (63 aa)) folds into the LCN-type CS-alpha/beta domain. Cystine bridges form between C31-C82, C35-C57, C43-C63, and C47-C65. C82 carries the post-translational modification Cysteine amide.

Belongs to the long (4 C-C) scorpion toxin superfamily. Sodium channel inhibitor family. Beta subfamily. Expressed by the venom gland.

It localises to the secreted. Functionally, beta toxins bind voltage-independently at site-4 of sodium channels (Nav) and shift the voltage of activation toward more negative potentials thereby affecting sodium channel activation and promoting spontaneous and repetitive firing. This toxin shows moderate inhibition of Nav1.1/SCN1A, Nav1.2/SCN2A, and Nav1.4/SCN4A, and promotes a left voltage shift on these channels. It exhibits similar potency on Nav1.2/SCN2A and Nav1.4/SCN4A (40-50% peak current inhibition at 0.5 uM), and weaker inhibition on Nav1.2 (20-30% peak current inhibition at 0.5 uM). This Tityus obscurus (Amazonian scorpion) protein is Beta-toxin To4.